We begin with the raw amino-acid sequence, 677 residues long: MGLAKLVEDYTQSEAASLAQQLRDQLADYSQAYYTQDAPLVEDHVYDELYRDLEQLEAAFPVIVTNDSPTQKVGGQVLPGFTKVTHEIPMLSMGDVFSEAELAAFDQRLRKNTATEIEYNVELKIDGLAIDLIYEKGRFVRGATRGNGTIGEDITQNLKTIKAIPQKLTRPVSIEVRGECYMPKAAFADLNQKREAEGQAPFANPRNAAAGSLRQLDAKVAAARQLSAFIYTIVTFDDVQATTQSEALHVLAELGFNVNPTSVVCQNMAEVQAFIEQYQGTRNDLAYGIDGVVLKVNDLALQRQLGNTVKVPRWEIAYKFPPEEAETVIREIEWTVGRTGVVTPTAVMDPVQLAGTTVARASLHNADMLRDKDVRLLDTVLLHKAGDIIPEISQVVLAKRPSDSQAYGIPTTCPSCGHDLVHLDEEVALRCINPMCPAQMKEQLTHFASRNAMNIDGLGPRIITQLLEKELIHDVADLYRLTADDLAQLDKFKEKSINNLLNAIDASRQNSLERLLFGLGIRHVGAKAARLLAEHFQNLAALMASDQETIITVDTIGTIIADSLVTYFADSQVQTLMAELEAVGVNLTYTGVTKAQAATSDSYFNGKTVVLTGKLEQYTRGELKQLLEDNGAKVTGSVSKKTDALIAGQDAGSKLEKAQSLAIPIINEADLDNYLAQ.

NAD(+)-binding positions include 43–47 (DHVYD), 92–93 (SM), and Glu122. Lys124 serves as the catalytic N6-AMP-lysine intermediate. Arg145, Glu179, Lys295, and Lys319 together coordinate NAD(+). Residues Cys413, Cys416, Cys431, and Cys436 each coordinate Zn(2+). The 79-residue stretch at 599-677 (TSDSYFNGKT…EADLDNYLAQ (79 aa)) folds into the BRCT domain.

Belongs to the NAD-dependent DNA ligase family. LigA subfamily. The cofactor is Mg(2+). Mn(2+) is required as a cofactor.

The enzyme catalyses NAD(+) + (deoxyribonucleotide)n-3'-hydroxyl + 5'-phospho-(deoxyribonucleotide)m = (deoxyribonucleotide)n+m + AMP + beta-nicotinamide D-nucleotide.. Its function is as follows. DNA ligase that catalyzes the formation of phosphodiester linkages between 5'-phosphoryl and 3'-hydroxyl groups in double-stranded DNA using NAD as a coenzyme and as the energy source for the reaction. It is essential for DNA replication and repair of damaged DNA. This chain is DNA ligase, found in Latilactobacillus sakei subsp. sakei (strain 23K) (Lactobacillus sakei subsp. sakei).